The sequence spans 421 residues: UDP-N-acetylglucosamine 1-carboxyvinyltransferase (421 aa).

Lysine 22–asparagine 23 serves as a coordination point for phosphoenolpyruvate. A UDP-N-acetyl-alpha-D-glucosamine-binding site is contributed by arginine 92. Residue cysteine 116 is the Proton donor of the active site. Cysteine 116 is subject to 2-(S-cysteinyl)pyruvic acid O-phosphothioketal. Residues aspartate 306 and valine 328 each coordinate UDP-N-acetyl-alpha-D-glucosamine.

Belongs to the EPSP synthase family. MurA subfamily.

The protein resides in the cytoplasm. It carries out the reaction phosphoenolpyruvate + UDP-N-acetyl-alpha-D-glucosamine = UDP-N-acetyl-3-O-(1-carboxyvinyl)-alpha-D-glucosamine + phosphate. The protein operates within cell wall biogenesis; peptidoglycan biosynthesis. Its function is as follows. Cell wall formation. Adds enolpyruvyl to UDP-N-acetylglucosamine. The sequence is that of UDP-N-acetylglucosamine 1-carboxyvinyltransferase from Thermotoga petrophila (strain ATCC BAA-488 / DSM 13995 / JCM 10881 / RKU-1).